The chain runs to 576 residues: MEFRKEEFKKLAGNTLGHLHRILEKKQTNGETIELTEEGRPVIKEEKRQPVVDCTCFGLPRRYIIAIMSGLGFCISFGIRCNLGVAIVSMVNNNTVYKGNKIVIEQAQFTWDPETVGMIHGSFFWGYIVTQIPGGYICQKFAANRVFGFAIVATSTLNMLIPSAARVHFACVICVRILQGLVEGVTYPACHGIWSKWAPPLERSRLATTAFCGSYAGAVVAMPLAGVLVQYSGWSSVFYVYGSFGIMWYMFWILVSYESPAIHPTISEEEKKYIEESIGESTGLMNPMAKFKAPWRKFFTSMPVYAIIVANFCRSWTFYLLLISQPAYFEEVFGFEISKVGLLSALPHLVMTIIVPIGGQIADFLRTKRIMSTTNVRKMMNCGGFGMEATLLLVVGYSHSRGVAISFLVLAVGFSGFAISGFNVNHLDIAPRYASILMGISNGVGTLSGMVCPLIVGAMTKHKTREEWQYVFLIASLVHYGGVLFYGIFASGEKQPWAEPEETSDEKCGFIHEDELADESEEQSQAYGAYGSYGATQTTSQQNGGWTAEWEKKEEFIQDQGKDPYLYGTVAERDLS.

Residues 1 to 63 (MEFRKEEFKK…CTCFGLPRRY (63 aa)) are Cytoplasmic-facing. A helical transmembrane segment spans residues 64–84 (IIAIMSGLGFCISFGIRCNLG). The Vesicular segment spans residues 85-116 (VAIVSMVNNNTVYKGNKIVIEQAQFTWDPETV). Residue Asn93 is glycosylated (N-linked (GlcNAc...) asparagine). A helical membrane pass occupies residues 117–137 (GMIHGSFFWGYIVTQIPGGYI). The Cytoplasmic segment spans residues 138–140 (CQK). The chain crosses the membrane as a helical span at residues 141–161 (FAANRVFGFAIVATSTLNMLI). The Vesicular portion of the chain corresponds to 162–168 (PSAARVH). The chain crosses the membrane as a helical span at residues 169–189 (FACVICVRILQGLVEGVTYPA). The Cytoplasmic portion of the chain corresponds to 190-208 (CHGIWSKWAPPLERSRLAT). A helical membrane pass occupies residues 209-229 (TAFCGSYAGAVVAMPLAGVLV). Over 230–236 (QYSGWSS) the chain is Vesicular. Residues 237–257 (VFYVYGSFGIMWYMFWILVSY) traverse the membrane as a helical segment. Topologically, residues 258 to 302 (ESPAIHPTISEEEKKYIEESIGESTGLMNPMAKFKAPWRKFFTSM) are cytoplasmic. A helical transmembrane segment spans residues 303 to 323 (PVYAIIVANFCRSWTFYLLLI). The Vesicular segment spans residues 324–341 (SQPAYFEEVFGFEISKVG). A helical transmembrane segment spans residues 342–362 (LLSALPHLVMTIIVPIGGQIA). Topologically, residues 363-378 (DFLRTKRIMSTTNVRK) are cytoplasmic. Residues 379–399 (MMNCGGFGMEATLLLVVGYSH) traverse the membrane as a helical segment. Topologically, residues 400–401 (SR) are vesicular. Residues 402-422 (GVAISFLVLAVGFSGFAISGF) traverse the membrane as a helical segment. At 423–435 (NVNHLDIAPRYAS) the chain is on the cytoplasmic side. The chain crosses the membrane as a helical span at residues 436 to 456 (ILMGISNGVGTLSGMVCPLIV). Residues 457-469 (GAMTKHKTREEWQ) lie on the Vesicular side of the membrane. The chain crosses the membrane as a helical span at residues 470-490 (YVFLIASLVHYGGVLFYGIFA). Topologically, residues 491–576 (SGEKQPWAEP…YGTVAERDLS (86 aa)) are cytoplasmic. The segment at 517–547 (ADESEEQSQAYGAYGSYGATQTTSQQNGGWT) is disordered. Positions 534-545 (GATQTTSQQNGG) are enriched in polar residues.

This sequence belongs to the major facilitator superfamily. Sodium/anion cotransporter family. VGLUT subfamily.

The protein localises to the cytoplasmic vesicle. The protein resides in the secretory vesicle. Its subcellular location is the synaptic vesicle membrane. It localises to the cell membrane. It is found in the synapse. The protein localises to the synaptosome. The enzyme catalyses L-glutamate(out) = L-glutamate(in). It catalyses the reaction chloride(in) = chloride(out). It carries out the reaction 3 Na(+)(out) + phosphate(out) = 3 Na(+)(in) + phosphate(in). The catalysed reaction is phosphate(in) = phosphate(out). The enzyme catalyses K(+)(in) + H(+)(out) = K(+)(out) + H(+)(in). With respect to regulation, chloride channel activity is allosterically activated by lumenal H(+) and Cl(-) leading to synaptic vesicles acidification. The L-glutamate transport activity is allosterically activated by lumenal H(+) and Cl(-). The allosteric activation by H(+) efficiently prevents non-vesicular efflux across the plasma membrane, thereby restricting L-glutamate transport activity to acidic membranes such as synaptic vesicles. Its function is as follows. Multifunctional transporter that transports L-glutamate as well as multiple ions such as chloride, proton, potassium, sodium and phosphate. At the synaptic vesicle membrane, mainly functions as an uniporter which transports preferentially L-glutamate but also phosphate from the cytoplasm into synaptic vesicles at presynaptic nerve terminals of excitatory neural cells. The L-glutamate or phosphate uniporter activity is electrogenic and is driven by the proton electrochemical gradient, mainly by the electrical gradient established by the vacuolar H(+)-ATPase across the synaptic vesicle membrane. In addition, functions as a chloride channel that allows a chloride permeation through the synaptic vesicle membrane that affects the proton electrochemical gradient and promotes synaptic vesicles acidification. Moreover, may function as a K(+)/H(+) antiport allowing to maintain the electrical gradient and to decrease chemical gradient and therefore sustain vesicular glutamate uptake. The vesicular K(+)/H(+) antiport activity is electroneutral. At the plasma membrane, following exocytosis, functions as a symporter of Na(+) and phosphate from the extracellular space to the cytoplasm allowing synaptic phosphate homeostasis regulation. The symporter activity is driven by an inside negative membrane potential and is electrogenic. Is necessary for synaptic signaling of visual-evoked responses from photoreceptors. The chain is Vesicular glutamate transporter 1 from Xenopus tropicalis (Western clawed frog).